Here is a 183-residue protein sequence, read N- to C-terminus: Dual-action ribosomal maturation protein DarP (183 aa).

Belongs to the DarP family.

The protein localises to the cytoplasm. Functionally, member of a network of 50S ribosomal subunit biogenesis factors which assembles along the 30S-50S interface, preventing incorrect 23S rRNA structures from forming. Promotes peptidyl transferase center (PTC) maturation. The polypeptide is Dual-action ribosomal maturation protein DarP (Salmonella enteritidis PT4 (strain P125109)).